Reading from the N-terminus, the 498-residue chain is uncharacterized protein (498 aa).

The first 26 residues, 1–26, serve as a signal peptide directing secretion; sequence MEESSMAQASLICLLLSFSIIMLSNA. At 27–441 the chain is on the extracellular side; that stretch reads ADISIDCGSS…GEEKSSSNLA (415 aa). N-linked (GlcNAc...) asparagine glycans are attached at residues asparagine 44, asparagine 150, asparagine 354, and asparagine 357. A disordered region spans residues 351–439; sequence GSGNGTNSTS…KSGEEKSSSN (89 aa). Positions 362–414 are enriched in gly residues; sequence SGGGSPSPGGGSGSPPSTGGGSGSPPSTGGGGGSPSKGGGGGKSGGSNNGDGG. Residues 418-436 show a composition bias toward basic and acidic residues; sequence ASEDEKSADSSGKSGEEKS. A helical transmembrane segment spans residues 442–462; sequence LPLGISLPTLLSLGAGGWGVW. At 463–498 the chain is on the cytoplasmic side; it reads KYFIKPRRHPESELPLKQNISLQVNMGNATVVNAGQ.

Its subcellular location is the membrane. This is an uncharacterized protein from Arabidopsis thaliana (Mouse-ear cress).